The following is a 118-amino-acid chain: Small ribosomal subunit protein uS13 (118 aa).

It belongs to the universal ribosomal protein uS13 family. In terms of assembly, part of the 30S ribosomal subunit. Forms a loose heterodimer with protein S19. Forms two bridges to the 50S subunit in the 70S ribosome.

Located at the top of the head of the 30S subunit, it contacts several helices of the 16S rRNA. In the 70S ribosome it contacts the 23S rRNA (bridge B1a) and protein L5 of the 50S subunit (bridge B1b), connecting the 2 subunits; these bridges are implicated in subunit movement. Contacts the tRNAs in the A and P-sites. This is Small ribosomal subunit protein uS13 from Carsonella ruddii (strain PV).